A 121-amino-acid chain; its full sequence is Small ribosomal subunit protein uS11 (121 aa).

The protein belongs to the universal ribosomal protein uS11 family. As to quaternary structure, part of the 30S ribosomal subunit. Interacts with proteins S7 and S18. Binds to IF-3.

Functionally, located on the platform of the 30S subunit, it bridges several disparate RNA helices of the 16S rRNA. Forms part of the Shine-Dalgarno cleft in the 70S ribosome. The protein is Small ribosomal subunit protein uS11 of Ureaplasma parvum serovar 3 (strain ATCC 27815 / 27 / NCTC 11736).